The chain runs to 816 residues: Transcription factor qa-1f (816 aa).

Residues 76-103 (CDQCRAAREKCDGIQPACFPCVSQGRSC) constitute a DNA-binding region (zn(2)-C6 fungal-type). Residues 184–202 (SGQAAQDPSEDGQSPSEDI) show a composition bias toward polar residues. The tract at residues 184 to 235 (SGQAAQDPSEDGQSPSEDINVQDAGAKTSDFPHAPHLTFSAPKSSTAETRTL) is disordered.

It localises to the nucleus. Transcription activator; part of the qa gene cluster that mediates the catabolism of quinic acid (QA) and as such, allows the use of QA as a sole carbon source. Activates the expression of qa cluster genes by binding to a 16 base-pair consensus sequence 5'-GGRTAARYRYTTAYCC-3' present in the promoters of the target genes. Regulates its own expression. May regulate the expression of many other genes inclusing genes with products in 8 mutually connected metabolic pathways: (1) starch and sucrose metabolism; (2) glycolysis/glucanogenesis; (3) TCA Cycle; (4) butanoate metabolism; (5) pyruvate metabolism; (6) aromatic amino acid and QA metabolism; (7) valine, leucine, and isoleucine degradation; and (8) transport of sugars and amino acids. The chain is Transcription factor qa-1f from Neurospora crassa (strain ATCC 24698 / 74-OR23-1A / CBS 708.71 / DSM 1257 / FGSC 987).